The primary structure comprises 463 residues: MQVSRVLAALCGMLLCASGLFAASGDFCDSSLCLNGGTCLTGQDNDIYCLCPEGFTGLVCNETERGPCSPNPCYNDAKCLVTLDTQRGDIFTEYICQCPVGYSGIHCETETNYYNLDGEYMFTTAVPNTAVPTPAPTPDLSNNLASRCSTQLGMEGGAIADSQISASSVYMGFMGLQRWGPELARLYRTGIVNAWTASNYDSKPWIQVNLLRKMRVSGVMTQGASRAGRAEYLKTFKVAYSLDGRKFEFIQDESGGDKEFLGNLDNNSLKVNMFNPTLEAQYIKLYPVSCHRGCTLRFELLGCELHGCSEPLGLKNNTIPDSQMSASSSYKTWNLRAFGWYPHLGRLDNQGKINAWTAQSNSAKEWLQVDLGTQRQVTGIITQGARDFGHIQYVASYKVAHSDDGVQWTVYEEQGSSKVFQGNLDNNSHKKNIFEKPFMARYVRVLPVSWHNRITLRLELLGC.

The N-terminal stretch at 1–22 is a signal peptide; sequence MQVSRVLAALCGMLLCASGLFA. EGF-like domains are found at residues 24–61 and 64–108; these read SGDFCDSSLCLNGGTCLTGQDNDIYCLCPEGFTGLVCN and ERGP…IHCE. 3 cysteine pairs are disulfide-bonded: Cys28/Cys39, Cys33/Cys49, and Cys51/Cys60. N-linked (GlcNAc...) asparagine glycosylation is present at Asn61. Disulfide bonds link Cys68-Cys79, Cys73-Cys96, Cys98-Cys107, Cys148-Cys303, Cys290-Cys294, and Cys308-Cys463. The Cell attachment site signature appears at 87–89; sequence RGD. 2 F5/8 type C domains span residues 148 to 303 and 308 to 463; these read CSTQ…LLGC and CSEP…LLGC. Asn266 carries N-linked (GlcNAc...) asparagine glycosylation. N-linked (GlcNAc...) asparagine glycosylation is found at Asn316 and Asn426.

In terms of processing, N-glycosylated. Isoform 1 also exists in both an O-glycosylated and a non-O-glycosylated form. In terms of tissue distribution, mammary epithelial cell surfaces and spermatozoan. Isoform 2 is present in brain, heart, kidney and spleen and at low levels in lung, liver, small intestine and testis.

It is found in the membrane. It localises to the secreted. The protein resides in the cytoplasmic vesicle. The protein localises to the secretory vesicle. Its subcellular location is the acrosome membrane. Functionally, contributes to phagocytic removal of apoptotic cells in many tissues. Specific ligand for the alpha-v/beta-3 and alpha-v/beta-5 receptors. Also binds to phosphatidylserine-enriched cell surfaces in a receptor-independent manner. Zona pellucida-binding protein which may play a role in gamete interaction. Plays an important role in the maintenance of intestinal epithelial homeostasis and the promotion of mucosal healing. Promotes VEGF-dependent neovascularization. The polypeptide is Lactadherin (Mfge8) (Mus musculus (Mouse)).